The following is a 367-amino-acid chain: uncharacterized protein (367 aa).

The helical transmembrane segment at 8-28 threads the bilayer; that stretch reads VLIGTFVLAAILAVFGFIYWL.

Its subcellular location is the membrane. This is an uncharacterized protein from Bradyrhizobium diazoefficiens (strain JCM 10833 / BCRC 13528 / IAM 13628 / NBRC 14792 / USDA 110).